Consider the following 327-residue polypeptide: MKTPIRVAVTGAAGQIAYSLLFRIAAGDMLGEDQPVILQLLDIPQSLPSLKGVVMELDDCAFPLLRDITITDDPKTAFRDINIAMLVGARPRTKGMERKDLLEANGTIFRAQGKALDEVAGRDVKVLVVGNPANTNAYITMKNAPSLKPTSFSSMMRLDHNRAVFQLAVKVGQPVSSVRKMIVWGNHSSAQYPDLSHAEVDGHNAADLVNDMAWIETGFIPVIQKRGMEVIEARGSSSAASAANAAICHMRDWVSGTPEGDWVSMGIPSDGSYGIPEGVIYGYPVTCQGGEYKIVPDLEISEFSRMKMQASYRELMGERESIKHLLG.

11–17 is an NAD(+) binding site; it reads GAAGQIA. The substrate site is built by arginine 92 and arginine 98. NAD(+) is bound by residues asparagine 105, glutamine 112, and 129 to 131; that span reads VGN. Residues asparagine 131 and arginine 162 each coordinate substrate. Residue histidine 187 is the Proton acceptor of the active site.

The protein belongs to the LDH/MDH superfamily. MDH type 2 family.

The catalysed reaction is (S)-malate + NAD(+) = oxaloacetate + NADH + H(+). Catalyzes the reversible oxidation of malate to oxaloacetate. This is Malate dehydrogenase from Nitrosospira multiformis (strain ATCC 25196 / NCIMB 11849 / C 71).